We begin with the raw amino-acid sequence, 199 residues long: MSNVWFTSDLHIGHAKVAEDRDWAGPDHDLHLAELWDEQVGKEDVVWILGDISSGGTRAQLDALGWLLNRPGRKRLILGNHDRPHPMYRDAPRLSRLYWNVLDYMSTAARLRVPLDGGGHTNVLLSHFPYVGDHTAEQRFTQWRLRDEGLILLHGHTHSRIIRSTMTNPRQIHVGLDAWHDLVPMDEVREMVNDIEEGL.

This is Gene 66 protein (66) from Mycobacterium (Mycobacteriophage D29).